The sequence spans 660 residues: Bifunctional polymyxin resistance protein ArnA (660 aa).

The segment at M1–L304 is formyltransferase ArnAFT. Residue H104 is the Proton donor; for formyltransferase activity of the active site. (6R)-10-formyltetrahydrofolate is bound by residues R114 and V136 to D140. The tract at residues R314 to S660 is dehydrogenase ArnADH. Residues D347 and D368 to I369 contribute to the NAD(+) site. UDP-alpha-D-glucuronate is bound by residues A393, Y398, and T432–S433. Residue E434 is the Proton acceptor; for decarboxylase activity of the active site. UDP-alpha-D-glucuronate is bound by residues R460, N492, K526 to R535, and Y613. The active-site Proton donor; for decarboxylase activity is R619.

This sequence in the N-terminal section; belongs to the Fmt family. UDP-L-Ara4N formyltransferase subfamily. The protein in the C-terminal section; belongs to the NAD(P)-dependent epimerase/dehydratase family. UDP-glucuronic acid decarboxylase subfamily. Homohexamer, formed by a dimer of trimers.

The enzyme catalyses UDP-alpha-D-glucuronate + NAD(+) = UDP-beta-L-threo-pentopyranos-4-ulose + CO2 + NADH. The catalysed reaction is UDP-4-amino-4-deoxy-beta-L-arabinose + (6R)-10-formyltetrahydrofolate = UDP-4-deoxy-4-formamido-beta-L-arabinose + (6S)-5,6,7,8-tetrahydrofolate + H(+). It participates in nucleotide-sugar biosynthesis; UDP-4-deoxy-4-formamido-beta-L-arabinose biosynthesis; UDP-4-deoxy-4-formamido-beta-L-arabinose from UDP-alpha-D-glucuronate: step 1/3. Its pathway is nucleotide-sugar biosynthesis; UDP-4-deoxy-4-formamido-beta-L-arabinose biosynthesis; UDP-4-deoxy-4-formamido-beta-L-arabinose from UDP-alpha-D-glucuronate: step 3/3. The protein operates within bacterial outer membrane biogenesis; lipopolysaccharide biosynthesis. Functionally, bifunctional enzyme that catalyzes the oxidative decarboxylation of UDP-glucuronic acid (UDP-GlcUA) to UDP-4-keto-arabinose (UDP-Ara4O) and the addition of a formyl group to UDP-4-amino-4-deoxy-L-arabinose (UDP-L-Ara4N) to form UDP-L-4-formamido-arabinose (UDP-L-Ara4FN). The modified arabinose is attached to lipid A and is required for resistance to polymyxin and cationic antimicrobial peptides. The chain is Bifunctional polymyxin resistance protein ArnA from Salmonella heidelberg (strain SL476).